The primary structure comprises 750 residues: Olfactomedin-like protein 2B (750 aa).

Positions 1 to 22 are cleaved as a signal peptide; that stretch reads MAKPRLLVLYFALIVVPAWVSS. Coiled coils occupy residues 40–68 and 179–213; these read AEDETLQNEADNQENVLSQLLGDYDKVKA and KLEEEVSKNLTKENEQIKEDMEEIRTEMNKRGKEN. N-linked (GlcNAc...) asparagine glycosylation is found at Asn187 and Asn213. 2 disordered regions span residues 346 to 437 and 452 to 484; these read TRRP…PPAV and VPPTTVRTDSLGKDAPAGWGTTPASPTLSPEEE. Polar residues-rich tracts occupy residues 354–384 and 393–413; these read QGHSTAVTSDLNARTAPWSSALPQPSTSDPS and PTLQTTSVSPDPTRESVLQPS. The span at 416-430 shows a compositional bias: low complexity; the sequence is VPATTVAHTATQQPA. Positions 493 to 750 constitute an Olfactomedin-like domain; the sequence is RCKDTLSTIT…QVTYHVIFAY (258 aa). Cys494 and Cys680 are disulfide-bonded. Residue Asn695 is glycosylated (N-linked (GlcNAc...) asparagine).

Homodimer. Binds to heparin and chondroitin sulfate E. O-glycosylated and N-glycosylated.

The protein localises to the secreted. The chain is Olfactomedin-like protein 2B (OLFML2B) from Homo sapiens (Human).